Here is a 229-residue protein sequence, read N- to C-terminus: Cytidylate kinase (229 aa).

12 to 20 lines the ATP pocket; sequence GPSGSGKGT.

Belongs to the cytidylate kinase family. Type 1 subfamily.

It is found in the cytoplasm. The catalysed reaction is CMP + ATP = CDP + ADP. It carries out the reaction dCMP + ATP = dCDP + ADP. The polypeptide is Cytidylate kinase (Pseudomonas fluorescens (strain SBW25)).